The following is a 421-amino-acid chain: D-inositol 3-phosphate glycosyltransferase (421 aa).

H13 is a binding site for 1D-myo-inositol 3-phosphate. UDP-N-acetyl-alpha-D-glucosamine-binding positions include 19–20 and G27; that span reads QP. Residues 24–29, K82, Y115, T139, and R159 each bind 1D-myo-inositol 3-phosphate; that span reads DAGGMN. The UDP-N-acetyl-alpha-D-glucosamine site is built by R233, K238, and V294. 3 residues coordinate Mg(2+): F303, R304, and A306. Residues E316 and E324 each coordinate UDP-N-acetyl-alpha-D-glucosamine. T330 is a binding site for Mg(2+).

Belongs to the glycosyltransferase group 1 family. MshA subfamily. As to quaternary structure, homodimer.

The catalysed reaction is 1D-myo-inositol 3-phosphate + UDP-N-acetyl-alpha-D-glucosamine = 1D-myo-inositol 2-acetamido-2-deoxy-alpha-D-glucopyranoside 3-phosphate + UDP + H(+). In terms of biological role, catalyzes the transfer of a N-acetyl-glucosamine moiety to 1D-myo-inositol 3-phosphate to produce 1D-myo-inositol 2-acetamido-2-deoxy-glucopyranoside 3-phosphate in the mycothiol biosynthesis pathway. In Arthrobacter sp. (strain FB24), this protein is D-inositol 3-phosphate glycosyltransferase.